The primary structure comprises 307 residues: Serine/threonine-protein phosphatase 4 catalytic subunit (307 aa).

Position 2 is an N-acetylalanine (A2). Residues D54, H56, D82, and N114 each contribute to the Mn(2+) site. Catalysis depends on H115, which acts as the Proton donor. Mn(2+) contacts are provided by H164 and H238. Position 307 is a leucine methyl ester (L307).

The protein belongs to the PPP phosphatase family. PP-4 (PP-X) subfamily. As to quaternary structure, serine/threonine-protein phosphatase 4 (PP4) occurs in different assemblies of the catalytic and one or more regulatory subunits. Component of the PP4 complexes PPP4C-PPP4R1, PPP4C-PPP4R2, PPP4C-PPP4R2-PPP4R3A, PPP4C-PPP4R2-PPP4R3B and PPP4C-PPP4R4. The PPP4C-PPP4R2 complex appears to be a tetramer composed of 2 molecules of PPP4C and 2 molecules of PPP4R2. Interacts with REL, NFKB1/p50 and RELA. Interacts with SMN1 and GEMIN4. Interacts with IRS4 (phosphorylated). Interacts with SMEK1/PPP4R3A; the interaction requires PP4R2. Interacts with HDAC3. Mn(2+) serves as cofactor. Methylation at the C-terminal Leu-307 is critical for interactions with regulatory subunits and functions in DNA repair.

Its subcellular location is the cytoplasm. The protein localises to the nucleus. It is found in the cytoskeleton. It localises to the microtubule organizing center. The protein resides in the centrosome. It carries out the reaction O-phospho-L-seryl-[protein] + H2O = L-seryl-[protein] + phosphate. It catalyses the reaction O-phospho-L-threonyl-[protein] + H2O = L-threonyl-[protein] + phosphate. Its function is as follows. Protein phosphatase that is involved in many processes such as microtubule organization at centrosomes, maturation of spliceosomal snRNPs, apoptosis, DNA repair, tumor necrosis factor (TNF)-alpha signaling, activation of c-Jun N-terminal kinase MAPK8, regulation of histone acetylation, DNA damage checkpoint signaling, NF-kappa-B activation and cell migration. The PPP4C-PPP4R1 PP4 complex may play a role in dephosphorylation and regulation of HDAC3. The PPP4C-PPP4R2-PPP4R3A PP4 complex specifically dephosphorylates H2AX phosphorylated on Ser-140 (gamma-H2AX) generated during DNA replication and required for DNA double strand break repair. Dephosphorylates NDEL1 at CDK1 phosphorylation sites and negatively regulates CDK1 activity in interphase. In response to DNA damage, catalyzes RPA2 dephosphorylation, an essential step for DNA repair since it allows the efficient RPA2-mediated recruitment of RAD51 to chromatin. The protein is Serine/threonine-protein phosphatase 4 catalytic subunit (PPP4C) of Homo sapiens (Human).